The primary structure comprises 547 residues: Kelch repeat and BTB domain-containing protein 2 (547 aa).

In terms of domain architecture, BTB spans 20–89 (CDVIITIGDG…LYNRHISSMN (70 aa)). Kelch repeat units follow at residues 295 to 342 (DIII…VIDD), 343 to 389 (TIYA…VLDQ), and 391 to 454 (IYII…SHKD).

Interacts (via BTB domain) with host CUL3.

The protein resides in the host cytoplasm. Functionally, probable substrate-specific adapter of CUL3-containing E3 ubiquitin-protein ligases which mediate the ubiquitination and subsequent proteasomal degradation of host target proteins. The sequence is that of Kelch repeat and BTB domain-containing protein 2 (KBTB2) from Bos taurus (Bovine).